We begin with the raw amino-acid sequence, 1005 residues long: Defense-associated sirtuin 2 (1005 aa).

Positions 1 to 295 are SIR2; the sequence is MVKVDLESKR…YSAVMDLLIE (295 aa). An inter-dimer interaction region spans residues 56-111; sequence YPQWWRLVDKYHEELYGSPKKGNYSSDEYLRIPQIFYNVKGEMAFDGILKDFFQVD. Catalysis depends on residues tyrosine 134, aspartate 135, and histidine 171. The MID stretch occupies residues 296-548; sequence SQENKFITKD…YKILEFLSDN (253 aa). Residues 549–1005 are CTD; it reads QFLYDDTVKL…YLEILMNYFI (457 aa).

As to quaternary structure, homotetramer (dimer of dimers). Homodimer. The SIR2 domains are arranged in a central core, adopting a head-to-head arrangement, while the CTDs are positioned at the periphery of the complex. Tetramerization is necessary for the activation of NADase activity. The NADase enzymatic activity of this homotetrameric form is autoinhibited. The activated form of DSR2 (after binding to the phage tube protein) exists as tetramers and dimers, with the tetramers exhibiting more NADase activity. Each tetramer binds 4 NAD(+) molecules. (Microbial infection) Interacts (via C-terminus) with phage SPR tail tube monomer protein (via N-terminus) in a 4:4 DSR2-Tube assembly; this interaction induces a conformation change of the tube protein and activates the NADase activity of DSR2. In terms of assembly, (Microbial infection) Interacts (via C-terminus) with phage SPbeta DSAD1 in a 4:2 ratio; this interaction prevents activation of the NADase defense activity of DSR2.

It carries out the reaction NAD(+) + H2O = ADP-D-ribose + nicotinamide + H(+). (Microbial infection) NADase activity is activated through the binding of SPR phage tail tube monomer protein. NADase activity is inhibited through the binding to the phage SPbeta DSR anti-defense 1 (DSAD1). Its function is as follows. Anti-phage defense protein that is activated through the binding to the phage tail tube protein monomer and which hydrolyzes NAD+ upon activation (NADase activity). The resulting depletion of NAD(+) leads to an abortive infection. In Bacillus subtilis, this protein is Defense-associated sirtuin 2.